The sequence spans 440 residues: tRNA-2-methylthio-N(6)-dimethylallyladenosine synthase (440 aa).

Residues 2 to 117 (KGLYIKTYGC…LPELIVKASR (116 aa)) form the MTTase N-terminal domain. Residues C11, C47, C80, C157, C161, and C164 each coordinate [4Fe-4S] cluster. The 232-residue stretch at 143–374 (NSQGSSAFLA…QELISKQQLE (232 aa)) folds into the Radical SAM core domain. Positions 377–440 (QSMIGKTIPV…RQNSLLGCAA (64 aa)) constitute a TRAM domain.

The protein belongs to the methylthiotransferase family. MiaB subfamily. As to quaternary structure, monomer. [4Fe-4S] cluster serves as cofactor.

It is found in the cytoplasm. It catalyses the reaction N(6)-dimethylallyladenosine(37) in tRNA + (sulfur carrier)-SH + AH2 + 2 S-adenosyl-L-methionine = 2-methylsulfanyl-N(6)-dimethylallyladenosine(37) in tRNA + (sulfur carrier)-H + 5'-deoxyadenosine + L-methionine + A + S-adenosyl-L-homocysteine + 2 H(+). Catalyzes the methylthiolation of N6-(dimethylallyl)adenosine (i(6)A), leading to the formation of 2-methylthio-N6-(dimethylallyl)adenosine (ms(2)i(6)A) at position 37 in tRNAs that read codons beginning with uridine. In Wolbachia pipientis subsp. Culex pipiens (strain wPip), this protein is tRNA-2-methylthio-N(6)-dimethylallyladenosine synthase.